Consider the following 280-residue polypeptide: 2-dehydro-3-deoxyphosphooctonate aldolase (280 aa).

This sequence belongs to the KdsA family.

It is found in the cytoplasm. The catalysed reaction is D-arabinose 5-phosphate + phosphoenolpyruvate + H2O = 3-deoxy-alpha-D-manno-2-octulosonate-8-phosphate + phosphate. It participates in carbohydrate biosynthesis; 3-deoxy-D-manno-octulosonate biosynthesis; 3-deoxy-D-manno-octulosonate from D-ribulose 5-phosphate: step 2/3. The protein operates within bacterial outer membrane biogenesis; lipopolysaccharide biosynthesis. In Neisseria gonorrhoeae (strain NCCP11945), this protein is 2-dehydro-3-deoxyphosphooctonate aldolase.